The chain runs to 736 residues: Catalase-peroxidase (736 aa).

The tryptophyl-tyrosyl-methioninium (Trp-Tyr) (with M-249) cross-link spans 100 to 223 (WHSAGTYRIG…LAAVQMGLIY (124 aa)). The active-site Proton acceptor is the His-101. The segment at residues 223–249 (YVNPEGPDGKPDPVAAARDIRETFRRM) is a cross-link (tryptophyl-tyrosyl-methioninium (Tyr-Met) (with W-100)). His-264 contacts heme b.

This sequence belongs to the peroxidase family. Peroxidase/catalase subfamily. As to quaternary structure, homodimer or homotetramer. The cofactor is heme b. In terms of processing, formation of the three residue Trp-Tyr-Met cross-link is important for the catalase, but not the peroxidase activity of the enzyme.

It carries out the reaction H2O2 + AH2 = A + 2 H2O. The catalysed reaction is 2 H2O2 = O2 + 2 H2O. Functionally, bifunctional enzyme with both catalase and broad-spectrum peroxidase activity. The sequence is that of Catalase-peroxidase from Geobacillus kaustophilus (strain HTA426).